Here is a 424-residue protein sequence, read N- to C-terminus: MADVDDFDSLSNAELRAKMLAQGLPNIPVTDSSRKVLVKRLRASIGGQASPAASPKKTNRRETLAPAPGAPSAPAAASTPVDKLDGNKVAPATKARRTITAAEAKEPVRRLPEEAIRRRPDEADRLRSEEPVAARKPTTAPAAQPVQTRRTSTSSGSERKVVEPLRKPETIVEQPASSKRADREENYLKVNSLIVLESDEEEDEQLVQAADLVEQEHAARQKTTKLASSGTTTYEYKSKVVEPPRRQVYEATAAPVLPPSVPSARAQTTSSTRSYDYASNPAPGRYSSFVRTAAQGYVTAEAPPVASYSSSYKRTYANELSDDTDSKEDQYESTFARNLARLRAERIGDRISPYSRRTLASGNAGSGSLGYEPRARRSLRPNDNSVSEAFNRWLNSLEQKYHIKSKLFIVLLVLLLIGVYYIFY.

The region spanning 1–30 (MADVDDFDSLSNAELRAKMLAQGLPNIPVT) is the LEM domain. A required for binding to Med and germline stem cell maintenance region spans residues 1–50 (MADVDDFDSLSNAELRAKMLAQGLPNIPVTDSSRKVLVKRLRASIGGQAS). Residues 42-186 (RASIGGQASP…SSKRADREEN (145 aa)) are disordered. Residues S44, S50, and S54 each carry the phosphoserine modification. At T63 the chain carries Phosphothreonine. A compositionally biased stretch (low complexity) spans 65 to 80 (APAPGAPSAPAAASTP). The Nuclear localization signal signature appears at 92–99 (ATKARRTI). Residues 103–133 (EAKEPVRRLPEEAIRRRPDEADRLRSEEPVA) show a composition bias toward basic and acidic residues. S152 carries the post-translational modification Phosphoserine. Over residues 157-170 (SERKVVEPLRKPET) the composition is skewed to basic and acidic residues. Phosphoserine occurs at positions 192 and 198. Residues 259 to 278 (PSVPSARAQTTSSTRSYDYA) form a disordered region. Residues 262-274 (PSARAQTTSSTRS) show a composition bias toward low complexity. The interval 271–400 (STRSYDYASN…NRWLNSLEQK (130 aa)) is required for binding to Med. S321 carries the post-translational modification Phosphoserine. At T324 the chain carries Phosphothreonine. S326 carries the post-translational modification Phosphoserine. At T358 the chain carries Phosphothreonine. S378 and S385 each carry phosphoserine. Residues 400 to 424 (KYHIKSKLFIVLLVLLLIGVYYIFY) are essential for nuclear membrane localization and germline stem cell maintenance. The tract at residues 406–424 (KLFIVLLVLLLIGVYYIFY) is essential for nuclear membrane localization.

In terms of assembly, interacts with Med. Interacts with Lam. Interacts with aurA, alphaTub84B, gammaTub23C and gammaTub37C. Interacts with Nemp. Phosphorylation at Thr-63 by aurA may be required for exit from mitosis. May be phosphorylated by Cdk1 and Pka-C1. In terms of tissue distribution, expressed in all cell types of the germarium and testis. Expressed in nurse cells, follicle cells and oocytes.

Its subcellular location is the nucleus inner membrane. It localises to the nucleus. It is found in the nucleoplasm. The protein resides in the cytoplasm. The protein localises to the chromosome. Its subcellular location is the cytoskeleton. It localises to the spindle pole. It is found in the microtubule organizing center. The protein resides in the centrosome. Its function is as follows. Inner nuclear membrane protein. Involved in the attachment of membrane vesicles to chromatin during nuclear assembly, and is probably required for centrosome maturation and cell cycle progression during mitosis. Essential for differentiation of certain tissues and the maintenance of progenitor cell populations. Required for the differentiation and maintenance of male and female germline stem cells (GSCs), as well as the maintenance of somatic cells in the GSC niche. This role is likely to be independent of the BMP (Dpp) pathway that negatively regulates bam transcription during GSC differentiation. During development, plays essential and redundant functions with the other LEM domain proteins; bocks and MAN1. Also has a redundant but important role with bocks during larval development. The protein is Otefin of Drosophila melanogaster (Fruit fly).